We begin with the raw amino-acid sequence, 477 residues long: Small ribosomal subunit protein uS5m (477 aa).

It belongs to the universal ribosomal protein uS5 family. As to quaternary structure, component of the mitochondrial small ribosomal subunit (mt-SSU). Mature N.crassa 74S mitochondrial ribosomes consist of a small (37S) and a large (54S) subunit. The 37S small subunit contains a 16S ribosomal RNA (16S mt-rRNA) and 32 different proteins. The 54S large subunit contains a 23S rRNA (23S mt-rRNA) and 42 different proteins. uS3m, uS4m and uS5m form the narrow entry site of the mRNA channel.

It is found in the mitochondrion. Functionally, component of the mitochondrial ribosome (mitoribosome), a dedicated translation machinery responsible for the synthesis of mitochondrial genome-encoded proteins, including at least some of the essential transmembrane subunits of the mitochondrial respiratory chain. The mitoribosomes are attached to the mitochondrial inner membrane and translation products are cotranslationally integrated into the membrane. The chain is Small ribosomal subunit protein uS5m (mrps5) from Neurospora crassa (strain ATCC 24698 / 74-OR23-1A / CBS 708.71 / DSM 1257 / FGSC 987).